Reading from the N-terminus, the 173-residue chain is Photosystem I assembly protein Ycf3 (173 aa).

3 TPR repeats span residues 35–68, 72–105, and 120–153; these read AFVY…EEDT, GYIL…NPRL, and GEKA…APNN.

Belongs to the Ycf3 family.

Its subcellular location is the cellular thylakoid membrane. Essential for the assembly of the photosystem I (PSI) complex. May act as a chaperone-like factor to guide the assembly of the PSI subunits. The protein is Photosystem I assembly protein Ycf3 of Trichormus variabilis (strain ATCC 29413 / PCC 7937) (Anabaena variabilis).